A 365-amino-acid chain; its full sequence is 3-amino-4-hydroxybenzoate 4-O-methyltransferase (365 aa).

A compositionally biased stretch (polar residues) spans 1 to 18; sequence MTVPENAQHTAPDQTQHT. The disordered stretch occupies residues 1-32; it reads MTVPENAQHTAPDQTQHTAPDRTRQAQQAAPD. S-adenosyl-L-methionine contacts are provided by residues aspartate 227, 253–255, and arginine 270; that span reads GDF. Catalysis depends on histidine 273, which acts as the Proton acceptor.

This sequence belongs to the class I-like SAM-binding methyltransferase superfamily. Cation-independent O-methyltransferase family.

It catalyses the reaction 3-amino-2,4-dihydroxybenzoate + S-adenosyl-L-methionine = 3-amino-2-hydroxy-4-methoxybenzoate + S-adenosyl-L-homocysteine + H(+). Its pathway is antibiotic biosynthesis. Its function is as follows. Part of a gene cluster involved in the biosynthesis of cremeomycin, a light-sensitive o-diazoquinone with antibacterial and antiproliferative effects. Catalyzes the methylation of the C4 hydroxyl group of 3-amino-2,4-dihydroxybenzoate (3,2,4-ADHBA) to form 3-amino-2-hydroxy-4-methoxybenzoate (3,2,4-AHMBA). In vitro, can also catalyze the methylation of 3-amino-4-hydroxybenzoate (3,4-AHBA). The sequence is that of 3-amino-4-hydroxybenzoate 4-O-methyltransferase from Streptomyces cremeus.